The chain runs to 116 residues: Protein Wnt-5(III) (116 aa).

Ser1 carries the O-palmitoleoyl serine; by PORCN lipid modification. A glycan (N-linked (GlcNAc...) asparagine) is linked at Asn69. A disulfide bond links Cys82 and Cys97.

This sequence belongs to the Wnt family. Palmitoleoylation is required for efficient binding to frizzled receptors. Depalmitoleoylation leads to Wnt signaling pathway inhibition.

It is found in the secreted. It localises to the extracellular space. The protein localises to the extracellular matrix. Its function is as follows. Ligand for members of the frizzled family of seven transmembrane receptors. Probable developmental protein. May be a signaling molecule which affects the development of discrete regions of tissues. Is likely to signal over only few cell diameters. The sequence is that of Protein Wnt-5(III) (WNT-5(III)) from Eptatretus stoutii (Pacific hagfish).